The chain runs to 433 residues: Amino-acid acetyltransferase (433 aa).

One can recognise an N-acetyltransferase domain in the interval 287–426; it reads ELVREAAIED…ASLYNYQRNS (140 aa).

This sequence belongs to the acetyltransferase family. ArgA subfamily.

It localises to the cytoplasm. It catalyses the reaction L-glutamate + acetyl-CoA = N-acetyl-L-glutamate + CoA + H(+). It participates in amino-acid biosynthesis; L-arginine biosynthesis; N(2)-acetyl-L-ornithine from L-glutamate: step 1/4. This is Amino-acid acetyltransferase from Pseudomonas fluorescens (strain SBW25).